Reading from the N-terminus, the 256-residue chain is Small ribosomal subunit protein eS1 (256 aa).

Positions 1-18 are enriched in basic residues; it reads MAVGKNKRLSKGKKGVKK. A disordered region spans residues 1–21; it reads MAVGKNKRLSKGKKGVKKRTV. N-acetylalanine; partial is present on Ala2.

The protein belongs to the eukaryotic ribosomal protein eS1 family. As to quaternary structure, component of the small ribosomal subunit. Mature ribosomes consist of a small (40S) and a large (60S) subunit. The 40S subunit contains about 33 different proteins and 1 molecule of RNA (18S). The 60S subunit contains about 49 different proteins and 3 molecules of RNA (25S, 5.8S and 5S).

It is found in the cytoplasm. This is Small ribosomal subunit protein eS1 (rps1) from Neosartorya fischeri (strain ATCC 1020 / DSM 3700 / CBS 544.65 / FGSC A1164 / JCM 1740 / NRRL 181 / WB 181) (Aspergillus fischerianus).